A 443-amino-acid polypeptide reads, in one-letter code: Na(+)-translocating ferredoxin:NAD(+) oxidoreductase complex subunit C (443 aa).

4Fe-4S ferredoxin-type domains are found at residues 359–391 (ESAK…IAEY) and 398–428 (DKCE…VSSI). [4Fe-4S] cluster-binding residues include cysteine 369, cysteine 372, cysteine 375, cysteine 379, cysteine 408, cysteine 411, cysteine 414, and cysteine 418.

Belongs to the 4Fe4S bacterial-type ferredoxin family. RnfC subfamily. The complex is composed of six subunits: RnfA, RnfB, RnfC, RnfD, RnfE and RnfG. [4Fe-4S] cluster serves as cofactor.

It localises to the cell membrane. The catalysed reaction is 2 reduced [2Fe-2S]-[ferredoxin] + Na(+)(in) + NAD(+) + H(+) = 2 oxidized [2Fe-2S]-[ferredoxin] + Na(+)(out) + NADH. In terms of biological role, part of a membrane-bound complex that couples electron transfer with translocation of ions across the membrane. Couples electron transfer from reduced ferredoxin to NAD(+) with electrogenic movement of Na(+) out of the cell. Involved in caffeate respiration. In Acetobacterium woodii (strain ATCC 29683 / DSM 1030 / JCM 2381 / KCTC 1655 / WB1), this protein is Na(+)-translocating ferredoxin:NAD(+) oxidoreductase complex subunit C.